The chain runs to 109 residues: Small ribosomal subunit protein bS6 (109 aa).

Belongs to the bacterial ribosomal protein bS6 family.

In terms of biological role, binds together with bS18 to 16S ribosomal RNA. This is Small ribosomal subunit protein bS6 from Ehrlichia canis (strain Jake).